A 225-amino-acid chain; its full sequence is Protein ZW2 (225 aa).

Positions 7-225 constitute a DOG1 domain; sequence SETFASFFND…FYLRLRDLGV (219 aa).

Functionally, may be involved in the regulation of abscisic acid (ABA) sensitivity. This Arabidopsis thaliana (Mouse-ear cress) protein is Protein ZW2.